A 450-amino-acid chain; its full sequence is tRNA modification GTPase MnmE (450 aa).

Residues R23, E79, and K118 each coordinate (6S)-5-formyl-5,6,7,8-tetrahydrofolate. The TrmE-type G domain maps to 214-374 (GITLILVGKP…LKDHILAKVG (161 aa)). Residue N224 participates in K(+) binding. GTP-binding positions include 224 to 229 (NAGKSS), 243 to 249 (TSIAGTT), and 268 to 271 (DTAG). Residue S228 coordinates Mg(2+). T243, I245, and T248 together coordinate K(+). T249 provides a ligand contact to Mg(2+). K450 is a binding site for (6S)-5-formyl-5,6,7,8-tetrahydrofolate.

Belongs to the TRAFAC class TrmE-Era-EngA-EngB-Septin-like GTPase superfamily. TrmE GTPase family. As to quaternary structure, homodimer. Heterotetramer of two MnmE and two MnmG subunits. K(+) is required as a cofactor.

It localises to the cytoplasm. Exhibits a very high intrinsic GTPase hydrolysis rate. Involved in the addition of a carboxymethylaminomethyl (cmnm) group at the wobble position (U34) of certain tRNAs, forming tRNA-cmnm(5)s(2)U34. This Francisella philomiragia subsp. philomiragia (strain ATCC 25017 / CCUG 19701 / FSC 153 / O#319-036) protein is tRNA modification GTPase MnmE.